We begin with the raw amino-acid sequence, 312 residues long: Olfactory receptor-like protein COR6 (312 aa).

At 1–26 the chain is on the extracellular side; that stretch reads MASGNCTTPTTFILSGLTDNPGLQMP. N5 is a glycosylation site (N-linked (GlcNAc...) asparagine). Residues 27–49 form a helical membrane-spanning segment; that stretch reads LFMVFLAIYTITLLTNLGLIALI. Topologically, residues 50–57 are cytoplasmic; sequence SIDLQLQT. Residues 58-79 form a helical membrane-spanning segment; that stretch reads PMYIFLQNLSFTDAVYSTVITP. The Extracellular portion of the chain corresponds to 80–100; that stretch reads KMLATFLEETKTISYVGCILQ. A disulfide bond links C97 and C179. Residues 101–120 traverse the membrane as a helical segment; that stretch reads YFSFVLLTVRECLLLAVMAY. At 121–139 the chain is on the cytoplasmic side; the sequence is DRYAAICKPLLYPAIMTKA. A helical membrane pass occupies residues 140 to 164; it reads VCWRLVKGLYSLAFLNFLVHTSGLL. Topologically, residues 165-205 are extracellular; the sequence is KLSFCSSNVVNHFFCDNSPLFQISSSSTALNELLVFIFGSL. Residues 206-226 traverse the membrane as a helical segment; it reads FVMSSIITILISYVFIILTVV. The Cytoplasmic segment spans residues 227-239; that stretch reads RIRSKERKYKAFS. A helical membrane pass occupies residues 240 to 260; the sequence is TCTSHLMAVSLFHGTIVFMYF. The Extracellular portion of the chain corresponds to 261–271; that stretch reads QPANNFSLDKD. A helical transmembrane segment spans residues 272–292; that stretch reads KIMSLFYTVVIPMLNPLIYSW. The Cytoplasmic portion of the chain corresponds to 293 to 312; it reads RNKEVKDALHRAIATAVLFH.

It belongs to the G-protein coupled receptor 1 family.

The protein localises to the cell membrane. Odorant receptor. This Gallus gallus (Chicken) protein is Olfactory receptor-like protein COR6 (COR6).